The following is a 463-amino-acid chain: MAVEKTMDKIVALCKNRGFVFPGSDIYGGLANSWDYGPLGVEFKNNVKKAWWKKFVQESPYNVGLDSAILMNREVWVASGHVGGFSDPLMDCKECKARFRADKLVEDHMTENGAEVATADGWTNEQLKEYIERNNIVCPKCGKMNYTDIRKFNLMFKTFQGVTEDAKSEMYLRPETAQGIFVNFKAVQRTSRKKVPFGIAQIGKSFRNEITPGNFTFRTREFEQMELEFFCKPGTDLEWHKYWKDYCWNFLLNLNVKAENLRMRDHGEEELSFYSNATSDIEYLFPFGWGELWGIADRTDYDLSKHQEHSGQDLSYLDQTTNEKYVPYVIEPSLGADRVALAFLIEAYDEEELEGGDVRTVMHLHPALAPFKAAILPLSKKLSEKSLDIYAELSKKFNLDFDETGSIGKRYRRQDEIGTPYCITIDFDTLEDESVTIRNRDTMEQERIKISEIENYIQASLEF.

Substrate contacts are provided by arginine 100 and glutamate 175. ATP-binding positions include 207–209 (RNE), 217–222 (FRTREF), 291–292 (EL), and 335–338 (GADR). 222–226 (FEQME) is a binding site for substrate. Residue 331–335 (EPSLG) participates in substrate binding.

The protein belongs to the class-II aminoacyl-tRNA synthetase family. In terms of assembly, homodimer.

The protein localises to the cytoplasm. It carries out the reaction tRNA(Gly) + glycine + ATP = glycyl-tRNA(Gly) + AMP + diphosphate. Functionally, catalyzes the attachment of glycine to tRNA(Gly). The polypeptide is Glycine--tRNA ligase (Clostridium beijerinckii (strain ATCC 51743 / NCIMB 8052) (Clostridium acetobutylicum)).